The sequence spans 97 residues: Zinc metalloproteinase-disintegrin-like bothrojarin-4 (97 aa).

The Disintegrin domain maps to Pro-4 to Asn-90. Ca(2+) contacts are provided by Val-6, Asn-9, Phe-11, Glu-13, Glu-16, and Asp-19. 7 disulfide bridges follow: Cys-7–Cys-36, Cys-18–Cys-31, Cys-20–Cys-26, Cys-30–Cys-53, Cys-44–Cys-50, Cys-49–Cys-75, and Cys-62–Cys-82. Residue Asn-32 is glycosylated (N-linked (GlcNAc...) asparagine). Positions Lys-68–Asp-70 match the D/ECD-tripeptide; atypical (KCD) motif.

This sequence belongs to the venom metalloproteinase (M12B) family. P-III subfamily. P-IIIa sub-subfamily. In terms of assembly, monomer. Zn(2+) is required as a cofactor. Expressed by the venom gland.

Its subcellular location is the secreted. Its function is as follows. The hemorrhagic metalloproteinase-disintegrin-like bothrojarin-1 is a potent inhibitor of collagen-induced platelet aggregation by blockage of alpha-2/beta-1 (ITGA2/ITGB1) integrin. It does not present any fibrinogen-clotting activity. This Bothrops jararaca (Jararaca) protein is Zinc metalloproteinase-disintegrin-like bothrojarin-4.